The chain runs to 322 residues: ATP-dependent 6-phosphofructokinase (322 aa).

An ATP-binding site is contributed by Gly11. Residue 21–25 coordinates ADP; the sequence is RAVVR. ATP is bound by residues 72-73 and 102-105; these read RC and GDGS. Residue Asp103 participates in Mg(2+) binding. 127-129 provides a ligand contact to substrate; the sequence is TID. Asp129 (proton acceptor) is an active-site residue. Position 156 (Arg156) interacts with ADP. Residues Arg164 and 171-173 each bind substrate; that span reads MGR. Residues 187 to 189, Arg213, and 215 to 217 contribute to the ADP site; these read GAE and KKH. Substrate-binding positions include Glu224, Arg245, and 251-254; that span reads HVQR.

Belongs to the phosphofructokinase type A (PFKA) family. ATP-dependent PFK group I subfamily. Prokaryotic clade 'B1' sub-subfamily. Homotetramer. It depends on Mg(2+) as a cofactor.

It is found in the cytoplasm. The enzyme catalyses beta-D-fructose 6-phosphate + ATP = beta-D-fructose 1,6-bisphosphate + ADP + H(+). Its pathway is carbohydrate degradation; glycolysis; D-glyceraldehyde 3-phosphate and glycerone phosphate from D-glucose: step 3/4. Its activity is regulated as follows. Allosterically activated by ADP and other diphosphonucleosides, and allosterically inhibited by phosphoenolpyruvate. Catalyzes the phosphorylation of D-fructose 6-phosphate to fructose 1,6-bisphosphate by ATP, the first committing step of glycolysis. The chain is ATP-dependent 6-phosphofructokinase from Staphylococcus aureus (strain MRSA252).